The following is a 253-amino-acid chain: Zinc finger protein JAGGED (253 aa).

The segment at 1 to 46 (MRHEENYLDLNNLPDDFSKDGNKQALEEGSSSGQRKKKGSKEGKDE) is disordered. Positions 16–26 (DFSKDGNKQAL) are enriched in basic and acidic residues. The C2H2-type zinc finger occupies 51 to 73 (YECRFCSLKFCKSQALGGHMNRH).

As to quaternary structure, interacts with GATA18/HAN. In terms of tissue distribution, expressed in the emerging leaf, sepal, petal, stamen and carpel primordia. Not expressed in the apical shoot meristem (SAM).

It is found in the nucleus. Its function is as follows. Controls the morphogenesis of lateral organs. Functions in lateral organ shape and is sufficient to induce proliferation and growth of lateral organ tissue. Is necessary and sufficient for bract formation, but its expression is excluded from the cryptic bract, which could be a cause of bractless flowers in Arabidopsis. Participates with FIL and YAB3 in regulating valve margin development. Functions with JGL to define stamen and carpel shape. Functions with AS1 and AS2 in the sepal and petal primordia to repress boundary-specifying genes for normal development of the organs. The polypeptide is Zinc finger protein JAGGED (JAG) (Arabidopsis thaliana (Mouse-ear cress)).